A 180-amino-acid polypeptide reads, in one-letter code: Adenine phosphoribosyltransferase (180 aa).

It belongs to the purine/pyrimidine phosphoribosyltransferase family. Homodimer.

Its subcellular location is the cytoplasm. The catalysed reaction is AMP + diphosphate = 5-phospho-alpha-D-ribose 1-diphosphate + adenine. Its pathway is purine metabolism; AMP biosynthesis via salvage pathway; AMP from adenine: step 1/1. In terms of biological role, catalyzes a salvage reaction resulting in the formation of AMP, that is energically less costly than de novo synthesis. The sequence is that of Adenine phosphoribosyltransferase from Rhizobium johnstonii (strain DSM 114642 / LMG 32736 / 3841) (Rhizobium leguminosarum bv. viciae).